The following is a 1312-amino-acid chain: DNA repair protein RAD50.L (1312 aa).

Residues arginine 13, asparagine 38, glycine 39, glycine 41, lysine 42, threonine 43, threonine 44, valine 67, aspartate 69, and glutamine 159 each contribute to the ATP site. Threonine 43 contributes to the Mg(2+) binding site. A Mg(2+)-binding site is contributed by glutamine 159. Coiled-coil stretches lie at residues 203–342, 415–558, and 587–628; these read VREY…LNRE, LREF…IKSR, and INQT…FEEK. Residues 635 to 734 enclose the Zinc-hook domain; the sequence is SQDFDSDLSR…RKDDMMELKP (100 aa). Zn(2+) contacts are provided by cysteine 681 and cysteine 684. Positions 712–1070 form a coiled coil; the sequence is LKSAEGELKR…ENKSESLKTN (359 aa).

The protein belongs to the SMC family. RAD50 subfamily. As to quaternary structure, component of the MRN complex composed of two heterodimers RAD50 and MRE11 associated with a single NBN. The cofactor is Zn(2+).

Its subcellular location is the nucleus. The protein localises to the chromosome. It localises to the telomere. The catalysed reaction is ATP + H2O = ADP + phosphate + H(+). Functionally, component of the MRN complex, which plays a central role in double-strand break (DSB) repair, DNA recombination, maintenance of telomere integrity and meiosis. The MRN complex is involved in the repair of DNA double-strand breaks (DSBs) via homologous recombination (HR), an error-free mechanism which primarily occurs during S and G2 phases. The complex (1) mediates the end resection of damaged DNA, which generates proper single-stranded DNA, a key initial steps in HR, and is (2) required for the recruitment of other repair factors and efficient activation of ATM and ATR upon DNA damage. The MRN complex possesses single-strand endonuclease activity and double-strand-specific 3'-5' exonuclease activity, which are provided by mre11, to initiate end resection, which is required for single-strand invasion and recombination. Within the complex, rad50 is both required to bind DNA ends and hold them in close proximity and regulate the activity of MRE11. Rad50 provides an ATP-dependent control of MRE11 by positioning DNA ends into the mre11 active site: ATP-binding induces a large structural change from an open form with accessible MRE11 nuclease sites into a closed form. The MRN complex is also required for DNA damage signaling via activation of the atm and atr kinases: the nuclease activity of mre11 is not required to activate ATM and ATR. The MRN complex promotes recruitment of topbp1 to DNA damage sites. The MRN complex and rbbp8/CtIP are also required for chromosome alignment during metaphase. In Xenopus laevis (African clawed frog), this protein is DNA repair protein RAD50.L.